A 469-amino-acid polypeptide reads, in one-letter code: UDP-glycosyltransferase 43 (469 aa).

UDP-alpha-D-glucose is bound by residues Ser280, 345 to 346, 363 to 371, and 385 to 388; these read WV, HCGWNSILE, and YSEQ.

It belongs to the UDP-glycosyltransferase family.

Inhibited by Cu(2+) or Zn(2+). Functionally, glycosyltransferase that catalyzes the C-glucosylation of daidzein to puerarin. Shows activity with the isoflavones daidzein and genistein, but has no activity towards flavonoids such as 2-hydroxynaringenin. Can use UDP-glucose, but not UDP-galactose or UDP-glucuronic acid as sugar donor. Does not require bivalent cations for activity. This Pueraria montana var. lobata (Kudzu vine) protein is UDP-glycosyltransferase 43.